The primary structure comprises 138 residues: Small ribosomal subunit protein bS16 (138 aa).

A disordered region spans residues 92–138; it reads QAAKREADAKQAAKEAAEAKAAAEAEAKAAAEAESADAGAEEAPAEA. Basic and acidic residues predominate over residues 94-122; sequence AKREADAKQAAKEAAEAKAAAEAEAKAAA.

This sequence belongs to the bacterial ribosomal protein bS16 family.

This is Small ribosomal subunit protein bS16 from Synechococcus sp. (strain WH7803).